The primary structure comprises 476 residues: Cytochrome P450 monooxygenase ppzE (476 aa).

Cysteine 452 lines the heme pocket.

The protein belongs to the cytochrome P450 family. The cofactor is heme.

Its pathway is secondary metabolite biosynthesis. Functionally, cytochrome P450 monooxygenase; part of the gene cluster that mediates the biosynthesis of pyrrolopyrazines, secondary metabolites showing insecticidal activity. The role of ppzE within the pathway has still to be determined. The single multifunctional NRPS ppzA is sufficient to produce peramine via condensation of 1-pyrroline-5-carboxylate and arginine, N-methylation of the alpha-amino group of arginine and reduction of the thioester and the cyclization to form an iminium ion resulting in release from the peptide synthetase. Deprotonation of this intermediate and oxidation of the pyrroline ring would give rise to peramine. In Epichloe species that produce only peramine, the peramine synthetase gene is not localized in a gene cluster, in contrast to Metarhizium species that contain additional pyrrolopyrazine biosynthesis genes. The 2-oxoglutarate-Fe(II) type oxidoreductase ppzC hydroxylates peramine to yield the newly identified compound 8-hydroxyperamine whereas ppzD converts L-proline into trans-4-hydroxy-L-proline, a precursor of peramine biosynthesis. In Metarhizium majus (strain ARSEF 297), this protein is Cytochrome P450 monooxygenase ppzE.